Here is a 463-residue protein sequence, read N- to C-terminus: Zinc finger protein PLAGL1 (463 aa).

7 C2H2-type zinc fingers span residues Tyr4–His26, Tyr32–His56, His62–His84, Phe91–His113, Leu120–His142, His156–His178, and Phe184–His207. The segment at Leu285–Tyr310 is disordered. The span at Pro287–Pro297 shows a compositional bias: pro residues. The span at Leu298–Tyr310 shows a compositional bias: polar residues.

Belongs to the krueppel C2H2-type zinc-finger protein family. In terms of assembly, interacts with THRSP.

It localises to the nucleus. Acts as a transcriptional activator. Involved in the transcriptional regulation of type 1 receptor for pituitary adenylate cyclase-activating polypeptide. The sequence is that of Zinc finger protein PLAGL1 (PLAGL1) from Sus scrofa (Pig).